The following is a 533-amino-acid chain: Tryptophan N-monooxygenase CYP79A68 (533 aa).

A helical transmembrane segment spans residues 12–32; the sequence is VTPPISLSLAFIIFMFLVKFI. Asn209 carries N-linked (GlcNAc...) asparagine glycosylation. Cys471 serves as a coordination point for heme.

The protein belongs to the cytochrome P450 family. It depends on heme as a cofactor. As to expression, confined to buds.

It is found in the membrane. It catalyses the reaction L-tryptophan + 2 reduced [NADPH--hemoprotein reductase] + 2 O2 = (E)-(indol-3-yl)acetaldehyde oxime + 2 oxidized [NADPH--hemoprotein reductase] + CO2 + 3 H2O + 2 H(+). Catalyzes with low efficiency E and Z isomers of indole-3-acetaldoxime from tryptophan (Trp). The chain is Tryptophan N-monooxygenase CYP79A68 from Prunus mume (Japanese apricot).